Reading from the N-terminus, the 463-residue chain is Glycine--tRNA ligase (463 aa).

Arginine 102 provides a ligand contact to substrate. A disordered region spans residues 113 to 134; that stretch reads KHGHPPPNGLADIRDPDTGEPG. Residue glutamate 165 participates in substrate binding. ATP-binding positions include 197–199, 207–212, 284–285, and 328–331; these read RNE, FRTREF, EL, and GLTR. Residue 212–216 participates in substrate binding; that stretch reads FEQME. Substrate is bound at residue 324–328; that stretch reads EPAAG.

Belongs to the class-II aminoacyl-tRNA synthetase family. As to quaternary structure, homodimer.

The protein resides in the cytoplasm. The catalysed reaction is tRNA(Gly) + glycine + ATP = glycyl-tRNA(Gly) + AMP + diphosphate. Its function is as follows. Catalyzes the attachment of glycine to tRNA(Gly). This Mycolicibacterium paratuberculosis (strain ATCC BAA-968 / K-10) (Mycobacterium paratuberculosis) protein is Glycine--tRNA ligase.